The following is a 361-amino-acid chain: GTP 3',8-cyclase (361 aa).

The segment at 1–30 is disordered; that stretch reads MTVTALGLPTVARSTGDGSAGASPAPADGP. Residues 16–30 are compositionally biased toward low complexity; it reads GDGSAGASPAPADGP. Positions 34 to 252 constitute a Radical SAM core domain; that stretch reads TYGRAATDLR…LQQHFELTPD (219 aa). Arg43 is a binding site for GTP. [4Fe-4S] cluster is bound by residues Cys50 and Cys54. An S-adenosyl-L-methionine-binding site is contributed by Tyr56. Cys57 is a [4Fe-4S] cluster binding site. Arg94 is a binding site for GTP. Gly98 serves as a coordination point for S-adenosyl-L-methionine. Position 125 (Thr125) interacts with GTP. Residue Ser149 participates in S-adenosyl-L-methionine binding. Residue Lys186 coordinates GTP. Position 220 (Met220) interacts with S-adenosyl-L-methionine. The [4Fe-4S] cluster site is built by Cys288 and Cys291. 293 to 295 contacts GTP; it reads RTR. Cys305 is a [4Fe-4S] cluster binding site.

It belongs to the radical SAM superfamily. MoaA family. As to quaternary structure, monomer and homodimer. [4Fe-4S] cluster serves as cofactor.

It carries out the reaction GTP + AH2 + S-adenosyl-L-methionine = (8S)-3',8-cyclo-7,8-dihydroguanosine 5'-triphosphate + 5'-deoxyadenosine + L-methionine + A + H(+). Its pathway is cofactor biosynthesis; molybdopterin biosynthesis. Catalyzes the cyclization of GTP to (8S)-3',8-cyclo-7,8-dihydroguanosine 5'-triphosphate. This Mycolicibacterium smegmatis (strain ATCC 700084 / mc(2)155) (Mycobacterium smegmatis) protein is GTP 3',8-cyclase.